We begin with the raw amino-acid sequence, 786 residues long: uncharacterized protein (786 aa).

361–362 (WD) lines the substrate pocket. Glutamate 488 serves as the catalytic Proton donor. 590-591 (KQ) is a binding site for substrate. The disordered stretch occupies residues 762–786 (TRKPLLPPPPQPPGREPVHRRALAR). The span at 766–776 (LLPPPPQPPGR) shows a compositional bias: pro residues.

Belongs to the glycosyl hydrolase 65 family.

This is an uncharacterized protein from Mycobacterium tuberculosis (strain CDC 1551 / Oshkosh).